Consider the following 417-residue polypeptide: Glutamyl-tRNA reductase (417 aa).

Substrate is bound by residues 49-52 (TCNR), S107, 112-114 (EEQ), and Q118. C50 acts as the Nucleophile in catalysis. 187-192 (GTGEVS) is a binding site for NADP(+).

This sequence belongs to the glutamyl-tRNA reductase family. As to quaternary structure, homodimer.

It carries out the reaction (S)-4-amino-5-oxopentanoate + tRNA(Glu) + NADP(+) = L-glutamyl-tRNA(Glu) + NADPH + H(+). Its pathway is porphyrin-containing compound metabolism; protoporphyrin-IX biosynthesis; 5-aminolevulinate from L-glutamyl-tRNA(Glu): step 1/2. Its function is as follows. Catalyzes the NADPH-dependent reduction of glutamyl-tRNA(Glu) to glutamate 1-semialdehyde (GSA). This Cenarchaeum symbiosum (strain A) protein is Glutamyl-tRNA reductase.